A 113-amino-acid polypeptide reads, in one-letter code: Large ribosomal subunit protein uL22 (113 aa).

The protein belongs to the universal ribosomal protein uL22 family. In terms of assembly, part of the 50S ribosomal subunit.

This protein binds specifically to 23S rRNA; its binding is stimulated by other ribosomal proteins, e.g. L4, L17, and L20. It is important during the early stages of 50S assembly. It makes multiple contacts with different domains of the 23S rRNA in the assembled 50S subunit and ribosome. Functionally, the globular domain of the protein is located near the polypeptide exit tunnel on the outside of the subunit, while an extended beta-hairpin is found that lines the wall of the exit tunnel in the center of the 70S ribosome. The chain is Large ribosomal subunit protein uL22 from Neorickettsia sennetsu (strain ATCC VR-367 / Miyayama) (Ehrlichia sennetsu).